A 195-amino-acid polypeptide reads, in one-letter code: UMP-CMP kinase (195 aa).

An ATP-binding site is contributed by Gly17–Thr22. Positions Ser37–Val66 are NMP. Residues Arg43, Glu64–Val66, and Gly91–Arg94 each bind a ribonucleoside 5'-phosphate. Asn98 contributes to the CMP binding site. Residues Lys131 to Asp141 form an LID region. Residue Arg132 participates in ATP binding. Residues Arg138 and Arg149 each contribute to the a ribonucleoside 5'-phosphate site. Arg177 serves as a coordination point for ATP.

This sequence belongs to the adenylate kinase family. UMP-CMP kinase subfamily. In terms of assembly, monomer. Requires Mg(2+) as cofactor.

The protein resides in the cytoplasm. The protein localises to the nucleus. The catalysed reaction is CMP + ATP = CDP + ADP. The enzyme catalyses dCMP + ATP = dCDP + ADP. It catalyses the reaction UMP + ATP = UDP + ADP. Catalyzes the phosphorylation of pyrimidine nucleoside monophosphates at the expense of ATP. Plays an important role in de novo pyrimidine nucleotide biosynthesis. Has preference for UMP and CMP as phosphate acceptors. This Dictyostelium discoideum (Social amoeba) protein is UMP-CMP kinase.